Reading from the N-terminus, the 343-residue chain is Ion-translocating oxidoreductase complex subunit D (343 aa).

4 helical membrane-spanning segments follow: residues 24–44, 45–65, 69–91, and 124–144; these read VLLA…AGTL, YNLA…LAAR, LAFF…ALPP, and AMLG…SWPA. T171 carries the FMN phosphoryl threonine modification. A run of 5 helical transmembrane segments spans residues 197–217, 221–241, 251–271, 284–304, and 305–325; these read FGGA…LYLL, LITW…SLLF, GSPL…FIVT, LVFG…GGYP, and DAVA…DYYT.

This sequence belongs to the NqrB/RnfD family. In terms of assembly, the complex is composed of six subunits: RnfA, RnfB, RnfC, RnfD, RnfE and RnfG. Requires FMN as cofactor.

The protein resides in the cell inner membrane. Its function is as follows. Part of a membrane-bound complex that couples electron transfer with translocation of ions across the membrane. In Ectopseudomonas mendocina (strain ymp) (Pseudomonas mendocina), this protein is Ion-translocating oxidoreductase complex subunit D.